The sequence spans 318 residues: Cytosolic Fe-S cluster assembly factor Nubp1 homolog (318 aa).

Basic and acidic residues predominate over residues 1 to 15 (MSAPEVENKPADAPE). The interval 1–29 (MSAPEVENKPADAPEHCPGTESENAGKAS) is disordered. The [4Fe-4S] cluster site is built by Cys17, Cys31, Cys34, and Cys40. Position 70–77 (70–77 (GKGGVGKS)) interacts with ATP. Residues Cys245 and Cys248 each contribute to the [4Fe-4S] cluster site.

The protein belongs to the Mrp/NBP35 ATP-binding proteins family. NUBP1/NBP35 subfamily. Heterotetramer of 2 Nubp1 and 2 Nubp2 chains. It depends on [4Fe-4S] cluster as a cofactor.

The protein resides in the cytoplasm. Functionally, component of the cytosolic iron-sulfur (Fe/S) protein assembly (CIA) machinery. Required for maturation of extramitochondrial Fe-S proteins. The Nubp1-Nubp2 heterotetramer forms a Fe-S scaffold complex, mediating the de novo assembly of an Fe-S cluster and its transfer to target apoproteins. In Aedes aegypti (Yellowfever mosquito), this protein is Cytosolic Fe-S cluster assembly factor Nubp1 homolog.